A 200-amino-acid chain; its full sequence is Cysteine dioxygenase type 1 (200 aa).

Fe cation is bound by residues His86, His88, and His140. A cross-link (3'-(S-cysteinyl)-tyrosine (Cys-Tyr)) is located at residues 93–157; it reads CFLKMLQGNL…TEPAVSLHLY (65 aa).

This sequence belongs to the cysteine dioxygenase family. As to quaternary structure, monomer. Fe cation serves as cofactor. Ni(2+) is required as a cofactor. Requires Zn(2+) as cofactor. The thioether cross-link between Cys-93 and Tyr-157 plays a structural role through stabilizing the Fe(2+) ion, and prevents the production of highly damaging free hydroxyl radicals by holding the oxygen radical via hydroxyl hydrogen.

The enzyme catalyses L-cysteine + O2 = 3-sulfino-L-alanine + H(+). Its pathway is organosulfur biosynthesis; taurine biosynthesis; hypotaurine from L-cysteine: step 1/2. Functionally, catalyzes the oxidation of cysteine to cysteine sulfinic acid with addition of molecular dioxygen. This Bos taurus (Bovine) protein is Cysteine dioxygenase type 1 (CDO1).